A 96-amino-acid polypeptide reads, in one-letter code: Small ribosomal subunit protein bS6 (96 aa).

It belongs to the bacterial ribosomal protein bS6 family.

Its function is as follows. Binds together with bS18 to 16S ribosomal RNA. The protein is Small ribosomal subunit protein bS6 of Salinispora tropica (strain ATCC BAA-916 / DSM 44818 / JCM 13857 / NBRC 105044 / CNB-440).